A 323-amino-acid polypeptide reads, in one-letter code: Fatty acid desaturase 4, chloroplastic (323 aa).

The N-terminal 77 residues, 1 to 77 (MAVSLPTKYP…PRPNREKLVV (77 aa)), are a transit peptide targeting the chloroplast. The next 2 helical transmembrane spans lie at 101 to 121 (WVAA…IGGF) and 131 to 151 (LAGY…HWAI). The Histidine box-1 motif lies at 170–173 (QGHH). The chain crosses the membrane as a helical span at residues 204–224 (LAFNDPVFHGFVCTFAFCILF). Residues 229–233 (HAWAH) carry the Histidine box-2 motif. Positions 258–262 (HAEHH) match the Histidine box-3 motif.

Belongs to the fatty acid desaturase CarF family. The cofactor is Fe(2+).

The protein resides in the plastid. It is found in the chloroplast membrane. It catalyses the reaction a 1-acyl-2-hexadecanoyl-glycerolipid + 2 reduced [2Fe-2S]-[ferredoxin] + O2 + 2 H(+) = a 1-acyl-2-[(3E)-hexadec-3-enoyl]-glycerolipid + 2 oxidized [2Fe-2S]-[ferredoxin] + 2 H2O. It participates in lipid metabolism; fatty acid metabolism. Fatty acid desaturase involved in the production of chloroplast-specific phosphatidylglycerol molecular species containing 16:1(3E). Catalyzes the formation of a trans double bond introduced close to the carboxyl group of palmitic acid, which is specifically esterified to the sn-2 glyceryl carbon of phosphatidylglycerol. This chain is Fatty acid desaturase 4, chloroplastic, found in Arabidopsis thaliana (Mouse-ear cress).